The sequence spans 401 residues: MEKKKVVLAYSGGLDTSVAIKWLQEKNYDIIALCLDLGEGKDLAFVKEKALSVGAIKSYMIDVQEEFANEYALMAMQAHTLYEGKYPLVSALSRPLIAKKLVEIAEQEGATAVAHGCTGKGNDQVRFEVSIQALNPYLEVIAPVREWKWSREEEIAYAKENDVPIPINLDSPFSIDQNLWGRSNECGILEDPWAAPPEDAYEMTLALEDTPNKPEFVEIGFEAGVPTTLNGTAYPLSELIKTLNALAGKHGVGRIDHVENRLVGIKSREVYECPAAMTLITAHKELEDLTLVKEVAHFKPMIEQKITELIYNGLWFSPLKQALHAFLQETQKNVTGMVRVKLFKGHAIVEGRKSEYSLYDEKLATYTAQDEFNHDAAVGFISLFGLPTKVYSQVNQKKVEA.

Residue 9–17 (AYSGGLDTS) coordinates ATP. Tyr86 contacts L-citrulline. Gly116 contributes to the ATP binding site. L-aspartate contacts are provided by Thr118, Asn122, and Asp123. Asn122 contributes to the L-citrulline binding site. 5 residues coordinate L-citrulline: Arg126, Ser174, Ser183, Glu259, and Tyr271.

Belongs to the argininosuccinate synthase family. Type 1 subfamily. As to quaternary structure, homotetramer.

The protein resides in the cytoplasm. It carries out the reaction L-citrulline + L-aspartate + ATP = 2-(N(omega)-L-arginino)succinate + AMP + diphosphate + H(+). It participates in amino-acid biosynthesis; L-arginine biosynthesis; L-arginine from L-ornithine and carbamoyl phosphate: step 2/3. This chain is Argininosuccinate synthase, found in Bacillus cereus (strain Q1).